The primary structure comprises 435 residues: 3-ketoacyl-CoA thiolase (435 aa).

The Acyl-thioester intermediate role is filled by Cys98. Catalysis depends on proton acceptor residues His391 and Cys421.

The protein belongs to the thiolase-like superfamily. Thiolase family. As to quaternary structure, heterotetramer of two alpha chains (FadJ) and two beta chains (FadI).

The protein localises to the cytoplasm. The enzyme catalyses an acyl-CoA + acetyl-CoA = a 3-oxoacyl-CoA + CoA. It functions in the pathway lipid metabolism; fatty acid beta-oxidation. Functionally, catalyzes the final step of fatty acid oxidation in which acetyl-CoA is released and the CoA ester of a fatty acid two carbons shorter is formed. The chain is 3-ketoacyl-CoA thiolase from Vibrio cholerae serotype O1 (strain ATCC 39541 / Classical Ogawa 395 / O395).